A 207-amino-acid polypeptide reads, in one-letter code: PITH domain-containing protein P35G2.02 (207 aa).

In terms of domain architecture, PITH spans 13–189 (EHPFESGPND…PVVTIYEATP (177 aa)).

It belongs to the PITHD1 family.

The protein resides in the cytoplasm. It is found in the nucleus. The polypeptide is PITH domain-containing protein P35G2.02 (Schizosaccharomyces pombe (strain 972 / ATCC 24843) (Fission yeast)).